A 209-amino-acid polypeptide reads, in one-letter code: Imidazoleglycerol-phosphate dehydratase (209 aa).

It belongs to the imidazoleglycerol-phosphate dehydratase family.

Its subcellular location is the cytoplasm. The enzyme catalyses D-erythro-1-(imidazol-4-yl)glycerol 3-phosphate = 3-(imidazol-4-yl)-2-oxopropyl phosphate + H2O. It participates in amino-acid biosynthesis; L-histidine biosynthesis; L-histidine from 5-phospho-alpha-D-ribose 1-diphosphate: step 6/9. The chain is Imidazoleglycerol-phosphate dehydratase from Paracidovorax citrulli (strain AAC00-1) (Acidovorax citrulli).